Here is a 472-residue protein sequence, read N- to C-terminus: 3-isopropylmalate dehydratase large subunit (472 aa).

[4Fe-4S] cluster-binding residues include Cys353, Cys414, and Cys417.

This sequence belongs to the aconitase/IPM isomerase family. LeuC type 1 subfamily. Heterodimer of LeuC and LeuD. [4Fe-4S] cluster serves as cofactor.

The enzyme catalyses (2R,3S)-3-isopropylmalate = (2S)-2-isopropylmalate. Its pathway is amino-acid biosynthesis; L-leucine biosynthesis; L-leucine from 3-methyl-2-oxobutanoate: step 2/4. Functionally, catalyzes the isomerization between 2-isopropylmalate and 3-isopropylmalate, via the formation of 2-isopropylmaleate. The polypeptide is 3-isopropylmalate dehydratase large subunit (Psychrobacter arcticus (strain DSM 17307 / VKM B-2377 / 273-4)).